An 86-amino-acid polypeptide reads, in one-letter code: Secreted transmembrane peptide 6 (86 aa).

An N-terminal signal peptide occupies residues 1-31 (MGMKSPNIAAFMLPLLLILFTLSSQLKVVES). The SCOOP motif motif lies at 45–58 (IVYTPPSRSCGTSP). The SxS motif essential for MIK2 binding signature appears at 51-53 (SRS).

The protein belongs to the serine rich endogenous peptide (SCOOP) phytocytokine family. In terms of assembly, interacts with MIK2 (via extracellular leucine-rich repeat domain); this interaction triggers the formation of complex between MIK2 and the BAK1/SERK3 and SERK4 coreceptors, and subsequent BAK1 activation by phosphorylation. Mostly expressed in leaves, and, to a lower extent, in roots, stems, siliques, seeds and flowers.

It localises to the cell membrane. It is found in the secreted. The protein localises to the extracellular space. Its subcellular location is the apoplast. Brassicaceae-specific phytocytokine (plant endogenous peptide released into the apoplast) perceived by MIK2 in a BAK1/SERK3 and SERK4 coreceptors-dependent manner, that modulates various physiological and antimicrobial processes including growth prevention and reactive oxygen species (ROS) response regulation. Prevents general growth and development. The chain is Secreted transmembrane peptide 6 from Arabidopsis thaliana (Mouse-ear cress).